The chain runs to 238 residues: Urease subunit alpha (238 aa).

The tract at residues 1-102 (MKLTPKELDK…LVTVHTPIEA (102 aa)) is urease gamma. Positions 103–238 (NGKLVPGELF…DDNYVKTIKE (136 aa)) are urease beta.

The protein in the N-terminal section; belongs to the urease gamma subunit family. In the C-terminal section; belongs to the urease beta subunit family. Heterohexamer of 3 UreA (alpha) and 3 UreB (beta) subunits.

It is found in the cytoplasm. The enzyme catalyses urea + 2 H2O + H(+) = hydrogencarbonate + 2 NH4(+). It participates in nitrogen metabolism; urea degradation; CO(2) and NH(3) from urea (urease route): step 1/1. The chain is Urease subunit alpha from Helicobacter pylori (strain P12).